The following is a 574-amino-acid chain: Sulfite reductase [NADPH] hemoprotein beta-component (574 aa).

[4Fe-4S] cluster-binding residues include cysteine 439, cysteine 445, cysteine 484, and cysteine 488. Cysteine 488 contributes to the siroheme binding site.

This sequence belongs to the nitrite and sulfite reductase 4Fe-4S domain family. In terms of assembly, alpha(8)-beta(8). The alpha component is a flavoprotein, the beta component is a hemoprotein. Siroheme serves as cofactor. Requires [4Fe-4S] cluster as cofactor.

The enzyme catalyses hydrogen sulfide + 3 NADP(+) + 3 H2O = sulfite + 3 NADPH + 4 H(+). The protein operates within sulfur metabolism; hydrogen sulfide biosynthesis; hydrogen sulfide from sulfite (NADPH route): step 1/1. In terms of biological role, component of the sulfite reductase complex that catalyzes the 6-electron reduction of sulfite to sulfide. This is one of several activities required for the biosynthesis of L-cysteine from sulfate. This chain is Sulfite reductase [NADPH] hemoprotein beta-component, found in Paenibacillus sp. (strain JDR-2).